The primary structure comprises 259 residues: Ribosomal RNA small subunit methyltransferase A (259 aa).

Residues Asn13, Leu15, Gly40, Glu61, Asp85, and Asn103 each contribute to the S-adenosyl-L-methionine site.

Belongs to the class I-like SAM-binding methyltransferase superfamily. rRNA adenine N(6)-methyltransferase family. RsmA subfamily.

The protein localises to the cytoplasm. It carries out the reaction adenosine(1518)/adenosine(1519) in 16S rRNA + 4 S-adenosyl-L-methionine = N(6)-dimethyladenosine(1518)/N(6)-dimethyladenosine(1519) in 16S rRNA + 4 S-adenosyl-L-homocysteine + 4 H(+). Specifically dimethylates two adjacent adenosines (A1518 and A1519) in the loop of a conserved hairpin near the 3'-end of 16S rRNA in the 30S particle. May play a critical role in biogenesis of 30S subunits. The chain is Ribosomal RNA small subunit methyltransferase A from Neisseria meningitidis serogroup C / serotype 2a (strain ATCC 700532 / DSM 15464 / FAM18).